The chain runs to 540 residues: Chaperonin GroEL (540 aa).

ATP is bound by residues 30-33 (TLGP), 87-91 (DGTTT), Gly414, 479-481 (NAL), and Asp495.

This sequence belongs to the chaperonin (HSP60) family. In terms of assembly, forms a cylinder of 14 subunits composed of two heptameric rings stacked back-to-back. Interacts with the co-chaperonin GroES.

It localises to the cytoplasm. It catalyses the reaction ATP + H2O + a folded polypeptide = ADP + phosphate + an unfolded polypeptide.. Its function is as follows. Together with its co-chaperonin GroES, plays an essential role in assisting protein folding. The GroEL-GroES system forms a nano-cage that allows encapsulation of the non-native substrate proteins and provides a physical environment optimized to promote and accelerate protein folding. In Carboxydothermus hydrogenoformans (strain ATCC BAA-161 / DSM 6008 / Z-2901), this protein is Chaperonin GroEL.